Consider the following 465-residue polypeptide: Kynureninase (465 aa).

Residues leucine 133, threonine 134, 161-164 (FPSD), serine 217, aspartate 246, histidine 249, and tyrosine 271 contribute to the pyridoxal 5'-phosphate site. Lysine 272 bears the N6-(pyridoxal phosphate)lysine mark. Tryptophan 302 and asparagine 330 together coordinate pyridoxal 5'-phosphate.

The protein belongs to the kynureninase family. In terms of assembly, homodimer. Requires pyridoxal 5'-phosphate as cofactor.

Its subcellular location is the cytoplasm. It catalyses the reaction L-kynurenine + H2O = anthranilate + L-alanine + H(+). The catalysed reaction is 3-hydroxy-L-kynurenine + H2O = 3-hydroxyanthranilate + L-alanine + H(+). Its pathway is amino-acid degradation; L-kynurenine degradation; L-alanine and anthranilate from L-kynurenine: step 1/1. The protein operates within cofactor biosynthesis; NAD(+) biosynthesis; quinolinate from L-kynurenine: step 2/3. Catalyzes the cleavage of L-kynurenine (L-Kyn) and L-3-hydroxykynurenine (L-3OHKyn) into anthranilic acid (AA) and 3-hydroxyanthranilic acid (3-OHAA), respectively. This is Kynureninase from Nematostella vectensis (Starlet sea anemone).